Reading from the N-terminus, the 190-residue chain is MSDNSYKPYALGAARAGVDGGFKPGNDDPFYSGLSDQLADKGYFTAAADDLISWARTGSLMWMTFGLACCAVEMMHAGNPRYDLERFGMAPRGSPRQSDVMIVAGTLTNKMAPALRKVYDQMPEPRYVISMGSCANGGGYYHYSYSVVRGCDRIVPVDIYIPGCPPTAEALVYGFLQLQKKIRREGSIER.

The [4Fe-4S] cluster site is built by Cys69, Cys70, Cys134, and Cys164.

This sequence belongs to the complex I 20 kDa subunit family. In terms of assembly, NDH-1 is composed of 14 different subunits. Subunits NuoB, C, D, E, F, and G constitute the peripheral sector of the complex. It depends on [4Fe-4S] cluster as a cofactor.

It localises to the cell inner membrane. The catalysed reaction is a quinone + NADH + 5 H(+)(in) = a quinol + NAD(+) + 4 H(+)(out). In terms of biological role, NDH-1 shuttles electrons from NADH, via FMN and iron-sulfur (Fe-S) centers, to quinones in the respiratory chain. Couples the redox reaction to proton translocation (for every two electrons transferred, four hydrogen ions are translocated across the cytoplasmic membrane), and thus conserves the redox energy in a proton gradient. The protein is NADH-quinone oxidoreductase subunit B of Hyphomonas neptunium (strain ATCC 15444).